We begin with the raw amino-acid sequence, 706 residues long: Elongation factor G (706 aa).

A tr-type G domain is found at 8–297; it reads SYVRNIGIGA…AVVDYLPSPN (290 aa). GTP is bound by residues 17–24, 95–99, and 149–152; these read AHIDAGKT, DTPGH, and NKMD.

It belongs to the TRAFAC class translation factor GTPase superfamily. Classic translation factor GTPase family. EF-G/EF-2 subfamily.

Its subcellular location is the cytoplasm. Functionally, catalyzes the GTP-dependent ribosomal translocation step during translation elongation. During this step, the ribosome changes from the pre-translocational (PRE) to the post-translocational (POST) state as the newly formed A-site-bound peptidyl-tRNA and P-site-bound deacylated tRNA move to the P and E sites, respectively. Catalyzes the coordinated movement of the two tRNA molecules, the mRNA and conformational changes in the ribosome. This chain is Elongation factor G, found in Orientia tsutsugamushi (strain Ikeda) (Rickettsia tsutsugamushi).